The primary structure comprises 110 residues: UPF0060 membrane protein Nmul_A0351 (110 aa).

4 consecutive transmembrane segments (helical) span residues 7-27 (LFLF…PYLW), 33-53 (SAWL…LLTL), 63-83 (AAYG…VDGV), and 87-107 (AWDM…MFGP).

Belongs to the UPF0060 family.

The protein localises to the cell inner membrane. This chain is UPF0060 membrane protein Nmul_A0351, found in Nitrosospira multiformis (strain ATCC 25196 / NCIMB 11849 / C 71).